Consider the following 939-residue polypeptide: MSRDSDPMKWYHGNLSREAADELLKQGYEDGTFLVRESSTAAGDFVLSLLCQGEVCHYQVRRHGGEDAFFSIDDKVQTKILHGLDTLVDYYQQAANGLPTKLTVPLIRDLPPHNTRSHGVTNLLHRATSKNESKVVFELLKCGYRNFDAKNQDGQTALHLAALHSDEDILKHLLNAKVQVNSSDSFGCQPLHYAARSKPASFIRTLISAQANVQGRNIDNGYVPLHEAAKHGNLEAVQELLLAEAPPLPRTSSGEFPFDLAKEAGQTAVEEFLLNYKLPPANTTRDQWYHGTLTREEAVAILKKHAKELLAKQPEVDTSGCFLVRYSESPAASGLVLTLLCDQVVKNFRISQADLYQNGNKVQSGGSKFLYIDDGPYWPSVEHLIAHFMRFSYGLPVSLKYPVPPQPKPEVPSFATIPRSNMKPKAASPATPPTPVSPHSHHQHPHVPALTITKKKQKENSSSMFNTLRLTSPKKALFDMNSLRKNKSKGKRSDSESSVSGSLAGTEQELQAAAPMLKSLSFSTEFSTFNADGVTGSGAAAAGEVYNVPRNNTPIEIDLPPIAQKTEAEVEYFTKSDVAIERERAGQWIGNGYQPTMDVLSLLDQQIKAPAVARLNSLGPNASTESEMASYLHRKCSGTPSTPSATEVEAAKLRFFIEPEKLVLDREIGHGEFGSVHSGWLLRKSGAGEESRLEVAIKMLSDEHSNKQEFLREASVMMRLEHKCIVRLIGIAKGEMLMMVQELAPLGSMLQYILDHGHEITANAELKVWASQIACGMHYLESQHFVHRDLAARNILLTARHQAKISDFGMSRSLRPGSTEYQFTQGGRWPIRWYAPESFNLGIFSHASDVWSFGVTIWEMFSLGAPPYGEISNVDAIKLVDSGERLPQPNLCPAYIYAVMQSCWKERPKDRPTFVYLTEFFARDPDYQNLPELVQTVHI.

One can recognise an SH2 1 domain in the interval 10–106 (WYHGNLSREA…GLPTKLTVPL (97 aa)). ANK repeat units follow at residues 153–185 (DGQT…SSDS), 186–218 (FGCQ…GRNI), and 220–252 (NGYV…PRTS). The region spanning 288-403 (WYHGTLTREE…GLPVSLKYPV (116 aa)) is the SH2 2 domain. Disordered regions lie at residues 410-446 (EVPS…QHPH) and 476-505 (ALFD…SLAG). Residues 496–505 (ESSVSGSLAG) are compositionally biased toward polar residues. Positions 662 to 921 (LVLDREIGHG…PTFVYLTEFF (260 aa)) constitute a Protein kinase domain. Residues 668–676 (IGHGEFGSV) and K698 each bind ATP. The Proton acceptor role is filled by D789. Y927 carries the phosphotyrosine modification.

The protein belongs to the protein kinase superfamily. Tyr protein kinase family. In terms of assembly, interacts with drpr; this is required for the recruitment of drpr and glial cells to severed axons and for the phagocytosis of axonal debris by glial cells following axon injury. In terms of tissue distribution, gastrulation embryos show expression in ectodermal cells along the cephalic furrow and ventral midline. Proctodeum, stomodeum and their derived structures (foregut, atrium, pharynx, esophagus and hindgut) continue to show expression from stage 8-9 to late embryos. Other ectodermally derived structures (frontal sac, salivary gland and labium) and developing tracheal system also show expression.

It is found in the cytoplasm. The catalysed reaction is L-tyrosyl-[protein] + ATP = O-phospho-L-tyrosyl-[protein] + ADP + H(+). In terms of biological role, following axon injury, required for recruitment of drpr and glial cells to severed axons and for glial clearance of severed axons from the central nervous system. Together with Src42a and drpr, promotes the migration of macrophages to sites of wounding as part of a signaling cascade where Scr42a detects production of hydrogen peroxide at wound sites which triggers phosphorylation of drpr and subsequent recruitment and activation of shark. May be involved in signal transduction on the apical surface of ectodermal epithelial cells, regulating their polarity during invagination. Crumbs (crb) may be the intracellular signal. This chain is Tyrosine-protein kinase Shark, found in Drosophila melanogaster (Fruit fly).